We begin with the raw amino-acid sequence, 769 residues long: Calcium up-regulated protein B (769 aa).

Positions 1–22 are disordered; it reads MINIEDISKSSNQSEEKQLKST. Ricin B-type lectin domains lie at 25-145 and 158-296; these read KPKY…WTTF and FQSK…WITN.

Belongs to the cup family.

It localises to the cytoplasm. It is found in the membrane. Functionally, may play an important role in stabilizing and/or regulating the cell membrane during Ca(2+) stress or certain stages of development. The protein is Calcium up-regulated protein B (cupB) of Dictyostelium discoideum (Social amoeba).